Consider the following 847-residue polypeptide: Protein SEY1 (847 aa).

The Cytoplasmic portion of the chain corresponds to 1-720 (MSSGEPLSET…KRSIVQHVTQ (720 aa)). One can recognise a GB1/RHD3-type G domain in the interval 55–290 (GHNYHIVAVF…VENDIFKPEY (236 aa)). 65-72 (GSQSTGKS) serves as a coordination point for GTP. The helical transmembrane segment at 721-741 (IPYYIYIIILLLGWNEFMAVV) threads the bilayer. The Lumenal segment spans residues 742–744 (RNP). The helical transmembrane segment at 745-765 (FTFSLAIILGASLYILYTMNL) threads the bilayer. The Cytoplasmic portion of the chain corresponds to 766 to 847 (LKPALTVTQR…VTSLNVVEEE (82 aa)).

Belongs to the TRAFAC class dynamin-like GTPase superfamily. GB1/RHD3 GTPase family. RHD3 subfamily.

It localises to the endoplasmic reticulum membrane. Functionally, cooperates with the reticulon proteins and tubule-shaping DP1 family proteins to generate and maintain the structure of the tubular endoplasmic reticulum network. Has GTPase activity, which is required for its function in ER organization. The sequence is that of Protein SEY1 from Lodderomyces elongisporus (strain ATCC 11503 / CBS 2605 / JCM 1781 / NBRC 1676 / NRRL YB-4239) (Yeast).